Reading from the N-terminus, the 451-residue chain is UPF0761 membrane protein Hhal_0704 (451 aa).

6 helical membrane passes run 66–86 (LLAI…FPVF), 122–142 (ELTA…LNTI), 162–182 (FMVY…SVAS), 204–224 (LLNL…YSLV), 228–248 (SVPV…FELA), and 268–288 (ALAA…VILI).

It belongs to the UPF0761 family.

The protein localises to the cell inner membrane. The chain is UPF0761 membrane protein Hhal_0704 from Halorhodospira halophila (strain DSM 244 / SL1) (Ectothiorhodospira halophila (strain DSM 244 / SL1)).